We begin with the raw amino-acid sequence, 251 residues long: Ubiquinone/menaquinone biosynthesis C-methyltransferase UbiE (251 aa).

Residues threonine 74, aspartate 95, 123 to 124, and serine 140 each bind S-adenosyl-L-methionine; that span reads NA.

This sequence belongs to the class I-like SAM-binding methyltransferase superfamily. MenG/UbiE family.

The catalysed reaction is a 2-demethylmenaquinol + S-adenosyl-L-methionine = a menaquinol + S-adenosyl-L-homocysteine + H(+). It catalyses the reaction a 2-methoxy-6-(all-trans-polyprenyl)benzene-1,4-diol + S-adenosyl-L-methionine = a 5-methoxy-2-methyl-3-(all-trans-polyprenyl)benzene-1,4-diol + S-adenosyl-L-homocysteine + H(+). It functions in the pathway quinol/quinone metabolism; menaquinone biosynthesis; menaquinol from 1,4-dihydroxy-2-naphthoate: step 2/2. The protein operates within cofactor biosynthesis; ubiquinone biosynthesis. Functionally, methyltransferase required for the conversion of demethylmenaquinol (DMKH2) to menaquinol (MKH2) and the conversion of 2-polyprenyl-6-methoxy-1,4-benzoquinol (DDMQH2) to 2-polyprenyl-3-methyl-6-methoxy-1,4-benzoquinol (DMQH2). This chain is Ubiquinone/menaquinone biosynthesis C-methyltransferase UbiE, found in Escherichia coli O9:H4 (strain HS).